We begin with the raw amino-acid sequence, 467 residues long: Siroheme synthase 2 (467 aa).

Residues 1–204 (MDYLPIFCQL…NDVALAERQI (204 aa)) are precorrin-2 dehydrogenase /sirohydrochlorin ferrochelatase. Residues 22–23 (EI) and 43–44 (CS) each bind NAD(+). Ser-128 is subject to Phosphoserine. A uroporphyrinogen-III C-methyltransferase region spans residues 216–467 (GEVVLVGAGP…EPSQPLAQMA (252 aa)). Pro-225 is an S-adenosyl-L-methionine binding site. The Proton acceptor role is filled by Asp-248. The Proton donor role is filled by Lys-270. S-adenosyl-L-methionine is bound by residues 301–303 (GGD), Ile-306, 331–332 (TA), Met-382, and Gly-411.

The protein in the N-terminal section; belongs to the precorrin-2 dehydrogenase / sirohydrochlorin ferrochelatase family. In the C-terminal section; belongs to the precorrin methyltransferase family.

The catalysed reaction is uroporphyrinogen III + 2 S-adenosyl-L-methionine = precorrin-2 + 2 S-adenosyl-L-homocysteine + H(+). It catalyses the reaction precorrin-2 + NAD(+) = sirohydrochlorin + NADH + 2 H(+). It carries out the reaction siroheme + 2 H(+) = sirohydrochlorin + Fe(2+). It participates in cofactor biosynthesis; adenosylcobalamin biosynthesis; precorrin-2 from uroporphyrinogen III: step 1/1. The protein operates within cofactor biosynthesis; adenosylcobalamin biosynthesis; sirohydrochlorin from precorrin-2: step 1/1. Its pathway is porphyrin-containing compound metabolism; siroheme biosynthesis; precorrin-2 from uroporphyrinogen III: step 1/1. It functions in the pathway porphyrin-containing compound metabolism; siroheme biosynthesis; siroheme from sirohydrochlorin: step 1/1. It participates in porphyrin-containing compound metabolism; siroheme biosynthesis; sirohydrochlorin from precorrin-2: step 1/1. Its function is as follows. Multifunctional enzyme that catalyzes the SAM-dependent methylations of uroporphyrinogen III at position C-2 and C-7 to form precorrin-2 via precorrin-1. Then it catalyzes the NAD-dependent ring dehydrogenation of precorrin-2 to yield sirohydrochlorin. Finally, it catalyzes the ferrochelation of sirohydrochlorin to yield siroheme. This Serratia proteamaculans (strain 568) protein is Siroheme synthase 2.